A 226-amino-acid chain; its full sequence is Urease accessory protein UreF (226 aa).

Belongs to the UreF family. In terms of assembly, ureD, UreF and UreG form a complex that acts as a GTP-hydrolysis-dependent molecular chaperone, activating the urease apoprotein by helping to assemble the nickel containing metallocenter of UreC. The UreE protein probably delivers the nickel.

The protein localises to the cytoplasm. Required for maturation of urease via the functional incorporation of the urease nickel metallocenter. The protein is Urease accessory protein UreF of Burkholderia cenocepacia (strain ATCC BAA-245 / DSM 16553 / LMG 16656 / NCTC 13227 / J2315 / CF5610) (Burkholderia cepacia (strain J2315)).